The chain runs to 1489 residues: ABC transporter FUM19 (1489 aa).

10 helical membrane-spanning segments follow: residues 33–53 (IIFFIAPSCVFTALTFVRIFV), 84–104 (CFSSSQVLGLVAGMTTAALSY), 116–136 (LLSIYLFLSLLLDIAHDRTLW), 143–163 (LEYGFSSVFSAAVAIKAFAVW), 264–284 (LLLPVLPRIALIGLSLAQAFL), 302–322 (WGLIGATVLIYGGISICTSLY), 373–393 (FLNLHELWANIVEAGLAAWFL), 397–417 (VGIAFIAPIGLVLLSFLGVSI), 482–502 (IASLIIAFAPDLTAPGIMLAA), and 511–531 (HKVYTAIALLTLLTVPLGSIF). The ABC transmembrane type-1 1 domain maps to 272–539 (IALIGLSLAQ…IFRSVSPLMS (268 aa)). The region spanning 591 to 823 (VKVIQASFGW…YQSHLQSLCI (233 aa)) is the ABC transporter 1 domain. 2 N-linked (GlcNAc...) asparagine glycosylation sites follow: N612 and N616. Residue 625 to 632 (GPVGSGKS) participates in ATP binding. N-linked (GlcNAc...) asparagine glycosylation is present at N670. Positions 852–862 (EQTRSSRRGAD) are enriched in basic and acidic residues. Residues 852–874 (EQTRSSRRGADNQETIASGADSS) form a disordered region. The segment covering 863–874 (NQETIASGADSS) has biased composition (polar residues). A run of 6 helical transmembrane segments spans residues 890 to 910 (AVPPVAIISFVTSSLSYGFLY), 945 to 965 (ILALLSELLTMYLALTYFALI), 977 to 999 (AITRAPLYFFASVDLGTITNYFS), 1031 to 1051 (AASSPYLAASYPLCFFLLYFV), 1120 to 1140 (WLLFILNTFVSLLALFTVALV), and 1149 to 1169 (GFAGAGLISLMQIGQFLTNVV). The ABC transmembrane type-1 2 domain occupies 902 to 1187 (SSLSYGFLYS…SMGAVSRLKA (286 aa)). The 272-residue stretch at 1214–1485 (IKIDGVSASY…KEGKFRALWE (272 aa)) folds into the ABC transporter 2 domain. 1254 to 1261 (GRTGSGKS) contributes to the ATP binding site.

The protein belongs to the ABC transporter superfamily. ABCC family. Conjugate transporter (TC 3.A.1.208) subfamily.

The protein localises to the cell membrane. In terms of biological role, ABC transporter that may provide the dual role of fumonisin export and self-protection by allowing the fungus to evade the harmful effect of its own fumonisin production. Plays a role in the repression of the gene cluster that mediates fumonisin biosynthesis. This is ABC transporter FUM19 from Gibberella moniliformis (strain M3125 / FGSC 7600) (Maize ear and stalk rot fungus).